A 282-amino-acid chain; its full sequence is Deoxyribonuclease-1 (282 aa).

The signal sequence occupies residues 1–22; it reads MRGARLTGALLALAGLLQVALS. N-linked (GlcNAc...) asparagine glycosylation is present at Asn-40. The active site involves Glu-100. Cysteines 123 and 126 form a disulfide. Asn-128 carries an N-linked (GlcNAc...) asparagine glycan. Residue His-156 is part of the active site. Cys-195 and Cys-231 are joined by a disulfide.

The protein belongs to the DNase I family. Ca(2+) serves as cofactor. It depends on Mg(2+) as a cofactor.

It is found in the secreted. The protein resides in the zymogen granule. The protein localises to the nucleus envelope. It catalyses the reaction Endonucleolytic cleavage to 5'-phosphodinucleotide and 5'-phosphooligonucleotide end-products.. Its function is as follows. Serum endocuclease secreted into body fluids by a wide variety of exocrine and endocrine organs. Expressed by non-hematopoietic tissues and preferentially cleaves protein-free DNA. Among other functions, seems to be involved in cell death by apoptosis. Binds specifically to G-actin and blocks actin polymerization. Together with DNASE1L3, plays a key role in degrading neutrophil extracellular traps (NETs). NETs are mainly composed of DNA fibers and are released by neutrophils to bind pathogens during inflammation. Degradation of intravascular NETs by DNASE1 and DNASE1L3 is required to prevent formation of clots that obstruct blood vessels and cause organ damage following inflammation. This chain is Deoxyribonuclease-1 (DNASE1), found in Equus caballus (Horse).